A 150-amino-acid polypeptide reads, in one-letter code: Triosephosphate isomerase (150 aa).

Substrate contacts are provided by Asn-9 and Lys-11. Catalysis depends on His-95, which acts as the Electrophile.

The protein belongs to the triosephosphate isomerase family. Homodimer.

It is found in the cytoplasm. It catalyses the reaction D-glyceraldehyde 3-phosphate = dihydroxyacetone phosphate. It functions in the pathway carbohydrate biosynthesis; gluconeogenesis. The protein operates within carbohydrate degradation; glycolysis; D-glyceraldehyde 3-phosphate from glycerone phosphate: step 1/1. The protein is Triosephosphate isomerase (tpiA) of Mycoplasmoides pirum (Mycoplasma pirum).